Here is a 301-residue protein sequence, read N- to C-terminus: MTLDRDAASHVAEVLSEALPYIRRFVGKTLVIKYGGNAMESEELKTGFARDIVLMKAVGINPVVVHGGGPQIGDLLKRLSIESHFIDGMRVTDAATMDVVEMVLGGQVNKDIVNLINRHGGSAIGLTGKDAELIRARKLTVTRQTPEMTTPEIIDIGHVGEVVSVNTDLLNMLVKGDFIPVIAPIGVGANGESYNINADLVAGKVAEALKAEKLMLLTNIAGLMDKQGQVLTGLTTEQVNELIADGTIYGGMLPKIKCALDAVQGGVNSSHIIDGRVPNAVLLEIFTDSGVGTLITNRKRH.

Residues 68–69 (GG), arginine 90, and asparagine 195 each bind substrate.

It belongs to the acetylglutamate kinase family. ArgB subfamily.

It localises to the cytoplasm. The catalysed reaction is N-acetyl-L-glutamate + ATP = N-acetyl-L-glutamyl 5-phosphate + ADP. The protein operates within amino-acid biosynthesis; L-arginine biosynthesis; N(2)-acetyl-L-ornithine from L-glutamate: step 2/4. Catalyzes the ATP-dependent phosphorylation of N-acetyl-L-glutamate. This chain is Acetylglutamate kinase, found in Pseudomonas entomophila (strain L48).